The chain runs to 208 residues: FMN-dependent NADH:quinone oxidoreductase 4 (208 aa).

This sequence belongs to the azoreductase type 1 family. In terms of assembly, homodimer. FMN serves as cofactor.

The enzyme catalyses 2 a quinone + NADH + H(+) = 2 a 1,4-benzosemiquinone + NAD(+). It carries out the reaction N,N-dimethyl-1,4-phenylenediamine + anthranilate + 2 NAD(+) = 2-(4-dimethylaminophenyl)diazenylbenzoate + 2 NADH + 2 H(+). Its function is as follows. Quinone reductase that provides resistance to thiol-specific stress caused by electrophilic quinones. Functionally, also exhibits azoreductase activity. Catalyzes the reductive cleavage of the azo bond in aromatic azo compounds to the corresponding amines. In Bacillus anthracis, this protein is FMN-dependent NADH:quinone oxidoreductase 4.